Reading from the N-terminus, the 759-residue chain is Tripartite motif-containing protein 46 (759 aa).

Positions 1–166 are required for proximal axon localization, axon formation and migration; that stretch reads MAEGEDMQTF…VERYRQSVSV (166 aa). The segment at 33 to 59 adopts an RING-type 1; degenerate zinc-finger fold; that stretch reads CPVCQEMYKQPLVLPCTHNVCQACARE. A disordered region spans residues 67–98; sequence IGHGGDPSSEPTSPASTPSTRSPRLSRRTLPK. The segment covering 73–89 has biased composition (low complexity); that stretch reads PSSEPTSPASTPSTRSP. The RING-type 2; degenerate zinc finger occupies 172–231; the sequence is CQLCKPPPLEATKGCSECRATFCNECFKLFHPWGTQKAQHEPTLPTLSFRPKGLMCPDHK. A B box-type zinc finger spans residues 222-263; it reads PKGLMCPDHKEEVTHYCKTCQRLVCQLCRVRRTHSGHKITPV. Zn(2+) contacts are provided by Cys227, His230, Cys249, and His255. Residues 294-400 are a coiled coil; that stretch reads ELEETIRHTE…RATEALQTFR (107 aa). The residue at position 330 (Ser330) is a Phosphoserine. Residues 370–427 enclose the COS domain; it reads LKETDQPCFVQAAKQLHNRIARATEALQTFRPAASSSFRHCQLDVGREMKLLTELNFL. Residues 411-429 form a required for microtubule association, proximal axon localization and axon formation region; the sequence is QLDVGREMKLLTELNFLRV. In terms of domain architecture, Fibronectin type-III spans 429 to 528; that stretch reads VPEAPVIDTQ…EDVHLHTPPA (100 aa). The B30.2/SPRY domain maps to 513–747; sequence GYGEYSEDVH…LQEPVGTKPE (235 aa). Position 627 is a phosphoserine (Ser627).

This sequence belongs to the TRIM/RBCC family. Interacts with TUBB3 and TUBA4A. As to expression, expressed in primary hippocampal and cortical neurons.

The protein resides in the cell projection. It localises to the axon. Its subcellular location is the cytoplasm. It is found in the cytoskeleton. Functionally, microtubule-associated protein that is involved in the formation of parallel microtubule bundles linked by cross-bridges in the proximal axon. Required for the uniform orientation and maintenance of the parallel microtubule fascicles, which are important for efficient cargo delivery and trafficking in axons. Thereby also required for proper axon specification, the establishment of neuronal polarity and proper neuronal migration. The sequence is that of Tripartite motif-containing protein 46 from Rattus norvegicus (Rat).